Consider the following 1070-residue polypeptide: DNA-directed RNA polymerase subunit beta (1070 aa).

It belongs to the RNA polymerase beta chain family. In terms of assembly, in plastids the minimal PEP RNA polymerase catalytic core is composed of four subunits: alpha, beta, beta', and beta''. When a (nuclear-encoded) sigma factor is associated with the core the holoenzyme is formed, which can initiate transcription.

It localises to the plastid. Its subcellular location is the chloroplast. It carries out the reaction RNA(n) + a ribonucleoside 5'-triphosphate = RNA(n+1) + diphosphate. Its function is as follows. DNA-dependent RNA polymerase catalyzes the transcription of DNA into RNA using the four ribonucleoside triphosphates as substrates. This chain is DNA-directed RNA polymerase subunit beta, found in Solanum lycopersicum (Tomato).